Reading from the N-terminus, the 193-residue chain is Superoxide dismutase [Fe] (193 aa).

Residues His-27, His-75, Asp-159, and His-163 each coordinate Fe cation.

Belongs to the iron/manganese superoxide dismutase family. As to quaternary structure, homodimer. It depends on Fe cation as a cofactor.

The catalysed reaction is 2 superoxide + 2 H(+) = H2O2 + O2. Functionally, destroys superoxide anion radicals which are normally produced within the cells and which are toxic to biological systems. The protein is Superoxide dismutase [Fe] (sodB) of Bacteroides fragilis (strain YCH46).